The chain runs to 1250 residues: DNA-directed RNA polymerase subunit beta (1250 aa).

The disordered stretch occupies residues 1139 to 1226; the sequence is GGAELAKPAP…DLFDEGDEDL (88 aa). 2 stretches are compositionally biased toward acidic residues: residues 1155-1183 and 1207-1226; these read ESGE…DPEE and ADDD…DEDL.

This sequence belongs to the RNA polymerase beta chain family. As to quaternary structure, the RNAP catalytic core consists of 2 alpha, 1 beta, 1 beta' and 1 omega subunit. When a sigma factor is associated with the core the holoenzyme is formed, which can initiate transcription.

It carries out the reaction RNA(n) + a ribonucleoside 5'-triphosphate = RNA(n+1) + diphosphate. DNA-dependent RNA polymerase catalyzes the transcription of DNA into RNA using the four ribonucleoside triphosphates as substrates. The polypeptide is DNA-directed RNA polymerase subunit beta (Symbiobacterium thermophilum (strain DSM 24528 / JCM 14929 / IAM 14863 / T)).